The chain runs to 3061 residues: MATYTSTIQIGSIECKLPYSPAPFGLVAGKREVSTTTDPFASLEMQLSARLRRQEFATIRTSKNGTCMYRYKTDAQIARIQKKREEREREEYNFQMAASSVVSKITIAGGEPPSKLESQVRKGVIHTTPRMRTAKTYRTPKLTEGQMNHLIKQVKQIMSTKGGSVQLISKKSTHVHYKEVLGSHRAVVCTAHMRGLRKRVDFRCDKWTVVRLQHLARTDKWTNQVRATDLRKGDSGVILSNTNLKGHFGRSSEGLFIVRGSHEGKIYDARSKVTQGVMDSMVQFSSAESFWEGLDGNWAQMRYPTDHTCVAGIPVEDCGRVAAIMTHSILPCYKITCPTCAQQYANLPASDLLKILHKHASDGLNRLGADKDRFVHVKKFLTILEHLTEPVDLSLEIFNEVFKSIGEKQQSPFKNLNILNNFFLKGKENTAREWQVAQLSLLELARFQKNRTDNIKKGDISFFRNKLSAKANWNLYLSCDNQLDKNANFLWGQREYHAKRFFSNYFEEIDPAKGYSAYENRLHPNGTRKLAIGNLIVPLDLAEFRRKMKGDYKRQPGVSKKCTSSKDGNYVYPCCCTTLDDGSAVESTFYPPTKKHLVIGNSGDQKYVDLPKGNSEMLYIARQGFCYINIFLAMLINISEEDAKDFTKKVRDMCVPKLGTWPTMMDLATTCAQMKIFYPDVHDAELPRILVDHETQTCHVVDSFGSQTTGYHILKASSVSQLILFANDELESDIKHYRVGGIPNACPELGSTISPFREGGVIMSESAALKLLLKGIFRPKVMRQLLLDEPYLLILSILSPGILMAMYNNGIFELAVKLWINEKQSIAMIASLLSALALRVSAAETLVAQRIIIDTAATDLLDATCDGFNLHLTYPTALMVLQVVKNRNECDDTLFKAGFPSYNTSVVQIMEKNYLNLLNDAWKDLTWREKLSATWYSYRAKRSITRYIKPTGRADLKGLYNISPQAFLGRGAQVVKGTASGLSERFNNYFNTKCVNISSFFIRRIFRRLPTFVTFVNSLLVISMLTSVVAVCQAIILDQRKYRREIELMQIEKNEIVCMELYASLQRKLERDFTWDEYIEYLKSVNPQIVQFAQAQMEEYDVRHQRSTPGVKNLEQVVAFMALVIMVFDAERSDCVFKTLNKFKGVLSSLDHEVRHQSLDDVIKNFDERNETIDFELSEDTIRTSSVLDTKFSDWWDRQIQMGHTLPHYRTEGHFMEFTRATAVQVANDIAHSEHLDFLVRGAVGSGKSTGLPVHLSVAGSVLLIEPTRPLAENVFKQLSSEPFFKKPTLRMRGNSIFGSSPISVMTSGFALHYFANNRSQLAQFNFVIFDECHVLDPSAMAFRSLLSVYHQACKVLKVSATPVGREVEFTTQQPVKLIVEDTLSFQSFVDAQGSKTNADVVQFGSNVLVYVSSYNEVDTLAKLLTDKNMMVTKVDGRTMKHGCLEIVTRGTSARPHFVVATNIIENGVTLDIDVVVDFGLKVSPFLDIDNRSIAYNKVSVSYGERIQRLGRVGRFKKGVALRIGHTEKGIIENPSMIATEAALACFAYNLPVMTGGVSTSLIGNCTVRQVKTMQQFELSPFFIQNFVAHDGSMHPVIHDILKKYKLRDCMTPLCDQSIPYRASSTWLSVSEYERLGVALEIPKQVKIAFHIKEIPPKLHEMLWETVVKYKDVCLFPSIRASSISKIAYTLRTDLFAIPRTLILVERLLEEERVKQSQFRSLIDEGCSSMFSIVNLTNTLRARYAKDYTAENIQKLEKVRSQLKEFSNLDGSACEENLIKRYESLQFVHHQAATSLAKDLKLKGTWKKSLVAKDLIIAGAVAIGGIGLIYSWFTQSVETVSHQGKNKSKRIQALKFRHARDKRAGFEIDNNDDTIEEFFGSAYRKKGKGKGTTVGMGKSSRRFVNMYGFDPTEYSFIQFVDPLTGAQIEENVYADIRDIQERFSDVRKKMVEDDEIELQALGSNTTIHAYFRKDWSDKALKIDLMPHNPLKICDKSNGIAKFPERELELRQTGPAIEVDVKDIPKQEVEHEAKSLMRGLRDFNPIAQTVCRVKVSAEYGTSEMYGFGFGAYIIVNHHLFKSFNGSMEVRSMHGTFRVKNLHSLSVLPIKGRDIIIIKMPKDFPVFPQKLHFRAPVQNERICLVGTNFQEKHASSIITETSTTYNVPGSTFWKHWIETNDGHCGLPVVSTADGCLVGIHSLANNVQTTNYYSAFDEDFESKYLRTNEHNEWTKSWVYNPDTVLWGPLKLKESTPKGLFKTTKLVQDLIDHDVVVEQAKHSAWMYEALTGNLQAVATMKSQLVTKHVVKGECRHFKEFLTVDSEAEAFFRPLMDAYGKSLLNREAYIKDIMKYSKPIDVGIVDCDAFEEAINRVIIYLQVHGFQKCNYITDEQEIFKALNMKAAVGAMYGGKKKDYFEHFTEADKEEIVMQSCPRLYKGSLGIWNGSLKAELRCKEKILANKTRTFTAAPLDTLLGGKVCVDDFNNQFYSKNIECCWTVGMTKFYGGWDRLLRRLPENWVYCDADGSQFDSSLTPYLINAVLIIRSTYMEDWDLGLQMLRNLYTEIIYTPISTPDGTIVKKFRGNNSGQPSTVVDNSLMVVLAMHYALIKECVEFEEIDSTCVFFVNGDDLLIAVNPEKESILDRMSQHFSDLGLNYDFSSRTRRKEELWFMSHRGLLIEGMYVPKLEEERIVSILQWDRADLPEHRLEAICAAMIESWGYSELTHQIRRFYSWLLQQQPFSTIAQEGKAPYIASMALKKLYMNRTVDEEELKAFTEMMVALDDELECDTYEVHHQGNDTIDAGGSTKKDAKQEQGSIQPNLNKEKEKDVNVGTSGTHTVPRIKAITSKMRMPKSKGAAVLNLKHLLEYAPQQIDISNTRATQSQFDTWYEAVQLAYDIGETEMPTVMNGLMVWCIENGTSPNINGVWVMMDGDEQVEYPLKPIVENAKPTLRQIMAHFSDVAEAYIEMRNKKEPYMPRYGLVRNLRDGSLARYAFDFYEVTSRTPVRAREAHIQMKAAALKSAQSRLFGLDGGISTQEENTERHTTEDVSPSMHTLLGVKNM.

A Peptidase S30 domain is found at 141–284 (KLTEGQMNHL…QGVMDSMVQF (144 aa)). Residues His192, Asp201, and Ser235 each act as for P1 proteinase activity in the active site. An Involved in interaction with stylet and aphid transmission motif is present at residues 334-337 (KITC). Residues 592–594 (PTK) carry the Involved in virions binding and aphid transmission motif. Residues 618–740 (LYIARQGFCY…ESDIKHYRVG (123 aa)) form the Peptidase C6 domain. Residues Cys626 and His699 each act as for helper component proteinase activity in the active site. The region spanning 1229–1381 (DIAHSEHLDF…TQQPVKLIVE (153 aa)) is the Helicase ATP-binding domain. 1242-1249 (GAVGSGKS) contacts ATP. A DECH box motif is present at residues 1331 to 1334 (DECH). The region spanning 1400 to 1559 (DVVQFGSNVL…NLPVMTGGVS (160 aa)) is the Helicase C-terminal domain. Positions 1884-1892 (RKKGKGKGT) match the Nuclear localization signal motif. At Tyr1907 the chain carries O-(5'-phospho-RNA)-tyrosine. Positions 2032–2250 (AKSLMRGLRD…VLWGPLKLKE (219 aa)) constitute a Peptidase C4 domain. Residues His2077, Asp2112, and Cys2182 each act as for nuclear inclusion protein A activity in the active site. The region spanning 2517-2641 (WVYCDADGSQ…AVNPEKESIL (125 aa)) is the RdRp catalytic domain. Residues 2795 to 2835 (GNDTIDAGGSTKKDAKQEQGSIQPNLNKEKEKDVNVGTSGT) form a disordered region. Residue Thr3044 is modified to Phosphothreonine.

Belongs to the potyviridae genome polyprotein family. As to quaternary structure, interacts with host eIF4E protein (via cap-binding region); this interaction mediates the translation of the VPg-viral RNA conjugates. Part of a complex that comprises VPg, RNA, host EIF4E and EIF4G; this interaction mediates the translation of the VPg-viral RNA conjugates. Post-translationally, VPg is uridylylated by the polymerase and is covalently attached to the 5'-end of the genomic RNA. This uridylylated form acts as a nucleotide-peptide primer for the polymerase. In terms of processing, potyviral RNA is expressed as two polyproteins which undergo post-translational proteolytic processing. Genome polyprotein is processed by NIa-pro, P1 and HC-pro proteinases resulting in the production of at least ten individual proteins. P3N-PIPO polyprotein is cleaved by P1 and HC-pro proteinases resulting in the production of three individual proteins. The P1 proteinase and the HC-pro cleave only their respective C-termini autocatalytically. 6K1 is essential for proper proteolytic separation of P3 from CI.

It is found in the host cytoplasmic vesicle. The protein localises to the host nucleus. Its subcellular location is the virion. The catalysed reaction is RNA(n) + a ribonucleoside 5'-triphosphate = RNA(n+1) + diphosphate. It catalyses the reaction Hydrolyzes glutaminyl bonds, and activity is further restricted by preferences for the amino acids in P6 - P1' that vary with the species of potyvirus, e.g. Glu-Xaa-Xaa-Tyr-Xaa-Gln-|-(Ser or Gly) for the enzyme from tobacco etch virus. The natural substrate is the viral polyprotein, but other proteins and oligopeptides containing the appropriate consensus sequence are also cleaved.. It carries out the reaction Hydrolyzes a Gly-|-Gly bond at its own C-terminus, commonly in the sequence -Tyr-Xaa-Val-Gly-|-Gly, in the processing of the potyviral polyprotein.. Required for aphid transmission and also has proteolytic activity. Only cleaves a Gly-Gly dipeptide at its own C-terminus. Interacts with virions and aphid stylets. Acts as a suppressor of RNA-mediated gene silencing, also known as post-transcriptional gene silencing (PTGS), a mechanism of plant viral defense that limits the accumulation of viral RNAs. May have RNA-binding activity. In terms of biological role, has helicase activity. It may be involved in replication. Functionally, indispensable for virus replication. Reduces the abundance of host transcripts related to jasmonic acid biosynthesis therefore altering the host defenses. In order to increase its own stability, decreases host protein degradation pathways. Its function is as follows. Indispensable for virus replication. Mediates the cap-independent, EIF4E-dependent translation of viral genomic RNAs. Binds to the cap-binding site of host EIF4E and thus interferes with the host EIF4E-dependent mRNA export and translation. VPg-RNA directly binds EIF4E and is a template for transcription. Also forms trimeric complexes with EIF4E-EIF4G, which are templates for translation. In terms of biological role, has RNA-binding and proteolytic activities. Functionally, an RNA-dependent RNA polymerase that plays an essential role in the virus replication. Its function is as follows. Involved in aphid transmission, cell-to-cell and systemis movement, encapsidation of the viral RNA and in the regulation of viral RNA amplification. This is Genome polyprotein from Potato virus Y (strain Hungarian) (PVY).